The sequence spans 189 residues: MPIDFLQPADIVAPQLLGCTLTHGGVGIRITEVEAYLDSTDEAAHTYRGKTPRNAAMFGPGGHMYVYISYGIHRAGNIVCGPEGTGQGVLLRAGEVVSGESIAQSRRGEGIPHARLAQGPGNFGQALGLEISDNHASVFGPSFLISDRVETPEIVRGPRIGISKNTEALLRFWIPNDPTVSGRRGYPKE.

This sequence belongs to the DNA glycosylase MPG family.

This Corynebacterium glutamicum (strain ATCC 13032 / DSM 20300 / JCM 1318 / BCRC 11384 / CCUG 27702 / LMG 3730 / NBRC 12168 / NCIMB 10025 / NRRL B-2784 / 534) protein is Putative 3-methyladenine DNA glycosylase (mag).